We begin with the raw amino-acid sequence, 432 residues long: Tol-Pal system protein TolB (432 aa).

The signal sequence occupies residues 1–21 (MSTLIRIALFALALMAGAAQA).

This sequence belongs to the TolB family. In terms of assembly, the Tol-Pal system is composed of five core proteins: the inner membrane proteins TolA, TolQ and TolR, the periplasmic protein TolB and the outer membrane protein Pal. They form a network linking the inner and outer membranes and the peptidoglycan layer.

Its subcellular location is the periplasm. Functionally, part of the Tol-Pal system, which plays a role in outer membrane invagination during cell division and is important for maintaining outer membrane integrity. This chain is Tol-Pal system protein TolB, found in Pseudomonas aeruginosa (strain ATCC 15692 / DSM 22644 / CIP 104116 / JCM 14847 / LMG 12228 / 1C / PRS 101 / PAO1).